Here is a 503-residue protein sequence, read N- to C-terminus: ATP synthase subunit alpha (503 aa).

169–176 (GDRSTGKT) is an ATP binding site.

This sequence belongs to the ATPase alpha/beta chains family. In terms of assembly, F-type ATPases have 2 components, CF(1) - the catalytic core - and CF(0) - the membrane proton channel. CF(1) has five subunits: alpha(3), beta(3), gamma(1), delta(1), epsilon(1). CF(0) has three main subunits: a(1), b(2) and c(9-12). The alpha and beta chains form an alternating ring which encloses part of the gamma chain. CF(1) is attached to CF(0) by a central stalk formed by the gamma and epsilon chains, while a peripheral stalk is formed by the delta and b chains.

It localises to the cell membrane. The enzyme catalyses ATP + H2O + 4 H(+)(in) = ADP + phosphate + 5 H(+)(out). In terms of biological role, produces ATP from ADP in the presence of a proton gradient across the membrane. The alpha chain is a regulatory subunit. The chain is ATP synthase subunit alpha from Dehalococcoides mccartyi (strain ATCC BAA-2100 / JCM 16839 / KCTC 5957 / BAV1).